Consider the following 225-residue polypeptide: NAD(P)H-quinone oxidoreductase subunit K, chloroplastic (225 aa).

[4Fe-4S] cluster is bound by residues Cys-43, Cys-44, Cys-108, and Cys-139.

This sequence belongs to the complex I 20 kDa subunit family. NDH is composed of at least 16 different subunits, 5 of which are encoded in the nucleus. [4Fe-4S] cluster is required as a cofactor.

It localises to the plastid. The protein localises to the chloroplast thylakoid membrane. The enzyme catalyses a plastoquinone + NADH + (n+1) H(+)(in) = a plastoquinol + NAD(+) + n H(+)(out). The catalysed reaction is a plastoquinone + NADPH + (n+1) H(+)(in) = a plastoquinol + NADP(+) + n H(+)(out). Its function is as follows. NDH shuttles electrons from NAD(P)H:plastoquinone, via FMN and iron-sulfur (Fe-S) centers, to quinones in the photosynthetic chain and possibly in a chloroplast respiratory chain. The immediate electron acceptor for the enzyme in this species is believed to be plastoquinone. Couples the redox reaction to proton translocation, and thus conserves the redox energy in a proton gradient. The chain is NAD(P)H-quinone oxidoreductase subunit K, chloroplastic from Nicotiana tabacum (Common tobacco).